The chain runs to 215 residues: Urease accessory protein UreG (215 aa).

24-31 serves as a coordination point for GTP; it reads GPVGSGKT.

The protein belongs to the SIMIBI class G3E GTPase family. UreG subfamily. Homodimer. UreD, UreF and UreG form a complex that acts as a GTP-hydrolysis-dependent molecular chaperone, activating the urease apoprotein by helping to assemble the nickel containing metallocenter of UreC. The UreE protein probably delivers the nickel.

It is found in the cytoplasm. In terms of biological role, facilitates the functional incorporation of the urease nickel metallocenter. This process requires GTP hydrolysis, probably effectuated by UreG. The polypeptide is Urease accessory protein UreG (Burkholderia orbicola (strain MC0-3)).